The sequence spans 439 residues: Trigger factor (439 aa).

The 86-residue stretch at Ser175 to Met260 folds into the PPIase FKBP-type domain.

It belongs to the FKBP-type PPIase family. Tig subfamily.

It is found in the cytoplasm. The catalysed reaction is [protein]-peptidylproline (omega=180) = [protein]-peptidylproline (omega=0). Functionally, involved in protein export. Acts as a chaperone by maintaining the newly synthesized protein in an open conformation. Functions as a peptidyl-prolyl cis-trans isomerase. This chain is Trigger factor, found in Ehrlichia chaffeensis (strain ATCC CRL-10679 / Arkansas).